The primary structure comprises 267 residues: MNAAPLVGYSSSGSEDEAEAVAAGRSKPGSGLHRCGQNPLPSQRFPVPDSVLNMFPSTEEGPEDDSARHGGRIRTFPHERGNWATHIYIPYEANEEFQDLLDVLLPRAQMFAPRLVQMEEFHLSLSQSVVLRHHWILPFVQVLKDRMASFQRFFFTANRVKIYTNQEKTRTFIGLEVSSGHAQFLDMVSEVDRVMKEFDLTTFYQDPSFHVSLAWCVGDARLQLEGQCQQELQEIVDEFEDSEMLLRVLAEQVRCKSGNKFFSMPLK.

The interval 1-72 (MNAAPLVGYS…EDDSARHGGR (72 aa)) is disordered. Histidine 122 serves as the catalytic Proton acceptor. 122–124 (HLS) provides a ligand contact to AMP. Residues glutamine 166, tyrosine 204, and 208-212 (SFHVS) contribute to the UMP site. AMP is bound by residues tyrosine 204 and 206–212 (DPSFHVS). Histidine 210 (proton donor) is an active-site residue.

Belongs to the 2H phosphoesterase superfamily. USB1 family. As to quaternary structure, interacts with PLRG1, CDC5L and PRPF19.

It localises to the nucleus. It carries out the reaction a 3'-end uridylyl-uridine-RNA = a 3'-end 2',3'-cyclophospho-uridine-RNA + uridine. It catalyses the reaction a 3'-end uridylyl-adenosine-RNA = a 3'-end 2',3'-cyclophospho-uridine-RNA + adenosine. 3'-5' RNA exonuclease that trims the 3' end of oligo(U) and oligo(A) tracts of the pre-U6 small nuclear RNA (snRNA) molecule, leading to the formation of a mature U6 snRNA 3' end-terminated with a 2',3'-cyclic phosphate. Participates in the U6 snRNA 3' end processing that prevents U6 snRNA degradation. In addition also removes uridines from the 3' end of U6atac snRNA and possibly the vault RNA VTRNA1-1. The sequence is that of U6 snRNA phosphodiesterase 1 from Rattus norvegicus (Rat).